The chain runs to 357 residues: F-box only protein 25 (357 aa).

The interaction with beta-actin stretch occupies residues 1 to 83 (MPFLGQDWRS…NDTNTQCFYR (83 aa)). One can recognise an F-box domain in the interval 225 to 273 (LTLSDLPVHMLSNILYRFSDGWDIVTLGQVTPTLSALSEDRQLWKKLCQ).

In terms of assembly, part of a SCF (SKP1-cullin-F-box) protein ligase complex consisting of FBXO25, SKP1, CUL1 and RBX1. Interacts directly with SKP1 and CUL1. Interacts (via C-terminus) with beta-actin (via N-terminus).

It localises to the nucleus. Its pathway is protein modification; protein ubiquitination. In terms of biological role, substrate-recognition component of the SCF (SKP1-CUL1-F-box protein)-type E3 ubiquitin ligase complex. May play a role in accumulation of expanded polyglutamine (polyQ) protein huntingtin (HTT). The polypeptide is F-box only protein 25 (FBXO25) (Bos taurus (Bovine)).